The sequence spans 249 residues: NLSDDLSFNFDKFVPNQKNIIFQGDASVSTKGVLEVTKVSKPTTRSIGRALYAAPIQIWDSITGKVASFATSFSFVVKDEPDEKIDGVDGLAFFLAPANSQIPSGSSAGMFGLFCSSNDSKSSNQIIAVEFDSYFGKTYNPWDPDFKHIGIDVNSIKSIKTVKDDWRNGEVADVVITYRAPTKSLTVSLSYPSDGTSNIVTASSVDLKAILPEWVSVGFSGGVGNAAKFDHDVLSWYFTSNLEANQSQT.

N-linked (GlcNAc...) asparagine glycosylation occurs at N118. Mn(2+) contacts are provided by E130 and D132. D132, Y134, N140, and D145 together coordinate Ca(2+). D145 and H148 together coordinate Mn(2+). N-linked (GlcNAc...) asparagine glycosylation is present at N245.

Belongs to the leguminous lectin family.

Its function is as follows. Di-N-acetylchitobiose specific lectin. This chain is Anti-H(O) lectin 2, found in Ulex europaeus (Furze).